The chain runs to 239 residues: 1-(5-phosphoribosyl)-5-[(5-phosphoribosylamino)methylideneamino] imidazole-4-carboxamide isomerase (239 aa).

Residue D8 is the Proton acceptor of the active site. The active-site Proton donor is D129.

This sequence belongs to the HisA/HisF family.

The protein resides in the cytoplasm. The catalysed reaction is 1-(5-phospho-beta-D-ribosyl)-5-[(5-phospho-beta-D-ribosylamino)methylideneamino]imidazole-4-carboxamide = 5-[(5-phospho-1-deoxy-D-ribulos-1-ylimino)methylamino]-1-(5-phospho-beta-D-ribosyl)imidazole-4-carboxamide. Its pathway is amino-acid biosynthesis; L-histidine biosynthesis; L-histidine from 5-phospho-alpha-D-ribose 1-diphosphate: step 4/9. This chain is 1-(5-phosphoribosyl)-5-[(5-phosphoribosylamino)methylideneamino] imidazole-4-carboxamide isomerase, found in Bacillus mycoides (strain KBAB4) (Bacillus weihenstephanensis).